Consider the following 218-residue polypeptide: PKHD-type hydroxylase Sala_1910 (218 aa).

Residues Arg74–Ser172 enclose the Fe2OG dioxygenase domain. Fe cation-binding residues include His92, Asp94, and His153. Position 163 (Arg163) interacts with 2-oxoglutarate.

It depends on Fe(2+) as a cofactor. Requires L-ascorbate as cofactor.

In Sphingopyxis alaskensis (strain DSM 13593 / LMG 18877 / RB2256) (Sphingomonas alaskensis), this protein is PKHD-type hydroxylase Sala_1910.